The following is a 372-amino-acid chain: Chaperone protein DnaJ (372 aa).

Residues 5 to 70 enclose the J domain; the sequence is DYYDLLEVGR…EKRAGYDRYG (66 aa). The segment at 134–212 adopts a CR-type zinc-finger fold; that stretch reads GIQAPIHYVT…CGGSGRRRDE (79 aa). Positions 147, 150, 164, 167, 186, 189, 200, and 203 each coordinate Zn(2+). CXXCXGXG motif repeat units follow at residues 147-154, 164-171, 186-193, and 200-207; these read CDTCQGTG, CHTCQGSG, CTTCYGEG, and CKKCGGSG.

Belongs to the DnaJ family. In terms of assembly, homodimer. Requires Zn(2+) as cofactor.

The protein resides in the cytoplasm. Participates actively in the response to hyperosmotic and heat shock by preventing the aggregation of stress-denatured proteins and by disaggregating proteins, also in an autonomous, DnaK-independent fashion. Unfolded proteins bind initially to DnaJ; upon interaction with the DnaJ-bound protein, DnaK hydrolyzes its bound ATP, resulting in the formation of a stable complex. GrpE releases ADP from DnaK; ATP binding to DnaK triggers the release of the substrate protein, thus completing the reaction cycle. Several rounds of ATP-dependent interactions between DnaJ, DnaK and GrpE are required for fully efficient folding. Also involved, together with DnaK and GrpE, in the DNA replication of plasmids through activation of initiation proteins. The polypeptide is Chaperone protein DnaJ (Wolbachia sp. subsp. Drosophila simulans (strain wRi)).